Reading from the N-terminus, the 66-residue chain is Probable Sec-independent protein translocase protein TatE (66 aa).

Residues 1-21 (MEGISITKLLVIAVLIVLLFG) traverse the membrane as a helical segment. Residues 46–66 (ETPAAKKSDGVEAAPRVENKE) form a disordered region.

Belongs to the TatA/E family. TatE subfamily.

The protein resides in the cell inner membrane. Functionally, part of the twin-arginine translocation (Tat) system that transports large folded proteins containing a characteristic twin-arginine motif in their signal peptide across membranes. TatE shares overlapping functions with TatA. This is Probable Sec-independent protein translocase protein TatE from Edwardsiella ictaluri (strain 93-146).